The chain runs to 213 residues: StAR-related lipid transfer protein 5 (213 aa).

Residues 1–213 (MDPSWATQES…LQKAVRKFHH (213 aa)) form the START domain.

Expressed in most tissues, with highest levels in liver and in kidney.

Functionally, may be involved in the intracellular transport of sterols or other lipids. May bind cholesterol or other sterols. This is StAR-related lipid transfer protein 5 (Stard5) from Mus musculus (Mouse).